Here is a 461-residue protein sequence, read N- to C-terminus: Cysteine--tRNA ligase (461 aa).

Zn(2+) is bound at residue C30. Positions 32–42 (VTIYDLCHIGH) match the 'HIGH' region motif. Positions 211, 236, and 240 each coordinate Zn(2+). Positions 268 to 272 (KMSKS) match the 'KMSKS' region motif. K271 is an ATP binding site.

The protein belongs to the class-I aminoacyl-tRNA synthetase family. Monomer. The cofactor is Zn(2+).

The protein localises to the cytoplasm. The catalysed reaction is tRNA(Cys) + L-cysteine + ATP = L-cysteinyl-tRNA(Cys) + AMP + diphosphate. The protein is Cysteine--tRNA ligase of Shewanella putrefaciens (strain CN-32 / ATCC BAA-453).